The primary structure comprises 611 residues: Probable methyltransferase PMT19 (611 aa).

Over 1-15 the chain is Cytoplasmic; sequence MNPSQQHLPKLCPKR. The helical; Signal-anchor for type II membrane protein transmembrane segment at 16-36 threads the bilayer; that stretch reads LFLFFTPFLLFSLYYILTTIK. The Lumenal segment spans residues 37–611; the sequence is TITISSQDRH…TILIVDNSIK (575 aa). Asn68, Asn97, Asn289, Asn408, Asn411, and Asn587 each carry an N-linked (GlcNAc...) asparagine glycan.

It belongs to the methyltransferase superfamily.

Its subcellular location is the endoplasmic reticulum membrane. The sequence is that of Probable methyltransferase PMT19 from Arabidopsis thaliana (Mouse-ear cress).